We begin with the raw amino-acid sequence, 113 residues long: Large ribosomal subunit protein bL17 (113 aa).

The protein belongs to the bacterial ribosomal protein bL17 family. As to quaternary structure, part of the 50S ribosomal subunit. Contacts protein L32.

This chain is Large ribosomal subunit protein bL17, found in Clostridium botulinum (strain Loch Maree / Type A3).